Here is a 346-residue protein sequence, read N- to C-terminus: Cyclin-dependent kinase 20 (346 aa).

In terms of domain architecture, Protein kinase spans 4–288 (YCILGRIGEG…ASKALLHQYF (285 aa)). ATP-binding positions include 10–18 (IGEGAHGIV) and lysine 33. Aspartate 127 acts as the Proton acceptor in catalysis.

It belongs to the protein kinase superfamily. CMGC Ser/Thr protein kinase family. CDC2/CDKX subfamily. As to quaternary structure, monomer. Interacts with TBC1D32. Interacts with MAK.

The protein localises to the nucleus. It is found in the cytoplasm. Its subcellular location is the cell projection. The protein resides in the cilium. It carries out the reaction L-seryl-[protein] + ATP = O-phospho-L-seryl-[protein] + ADP + H(+). It catalyses the reaction L-threonyl-[protein] + ATP = O-phospho-L-threonyl-[protein] + ADP + H(+). Required for high-level Shh responses in the developing neural tube. Together with TBC1D32, controls the structure of the primary cilium by coordinating assembly of the ciliary membrane and axoneme, allowing GLI2 to be properly activated in response to SHH signaling. Involved in cell growth. Activates CDK2, a kinase involved in the control of the cell cycle, by phosphorylating residue 'Thr-160'. The protein is Cyclin-dependent kinase 20 (CDK20) of Homo sapiens (Human).